The chain runs to 235 residues: RNA-free ribonuclease P (235 aa).

Belongs to the HARP family.

The catalysed reaction is Endonucleolytic cleavage of RNA, removing 5'-extranucleotides from tRNA precursor.. In terms of biological role, RNA-free RNase P that catalyzes the removal of the 5'-leader sequence from pre-tRNA to produce the mature 5'-terminus. The chain is RNA-free ribonuclease P from Methanothrix thermoacetophila (strain DSM 6194 / JCM 14653 / NBRC 101360 / PT) (Methanosaeta thermophila).